Reading from the N-terminus, the 434-residue chain is Glutamyl-tRNA reductase (434 aa).

Residues 49 to 52, Ser-109, 114 to 116, and Gln-120 contribute to the substrate site; these read TCNR and EPQ. The active-site Nucleophile is the Cys-50. An NADP(+)-binding site is contributed by 189-194; sequence GAGEMC.

It belongs to the glutamyl-tRNA reductase family. Homodimer.

The catalysed reaction is (S)-4-amino-5-oxopentanoate + tRNA(Glu) + NADP(+) = L-glutamyl-tRNA(Glu) + NADPH + H(+). Its pathway is porphyrin-containing compound metabolism; protoporphyrin-IX biosynthesis; 5-aminolevulinate from L-glutamyl-tRNA(Glu): step 1/2. In terms of biological role, catalyzes the NADPH-dependent reduction of glutamyl-tRNA(Glu) to glutamate 1-semialdehyde (GSA). The sequence is that of Glutamyl-tRNA reductase from Trichlorobacter lovleyi (strain ATCC BAA-1151 / DSM 17278 / SZ) (Geobacter lovleyi).